Here is a 365-residue protein sequence, read N- to C-terminus: Methylthioribose-1-phosphate isomerase (365 aa).

Substrate is bound by residues 53–55 (RGA), R90, and Q201. D242 (proton donor) is an active-site residue. Residue 252–253 (NK) participates in substrate binding.

Belongs to the eIF-2B alpha/beta/delta subunits family. MtnA subfamily.

The catalysed reaction is 5-(methylsulfanyl)-alpha-D-ribose 1-phosphate = 5-(methylsulfanyl)-D-ribulose 1-phosphate. It functions in the pathway amino-acid biosynthesis; L-methionine biosynthesis via salvage pathway; L-methionine from S-methyl-5-thio-alpha-D-ribose 1-phosphate: step 1/6. Catalyzes the interconversion of methylthioribose-1-phosphate (MTR-1-P) into methylthioribulose-1-phosphate (MTRu-1-P). The protein is Methylthioribose-1-phosphate isomerase of Methylorubrum populi (strain ATCC BAA-705 / NCIMB 13946 / BJ001) (Methylobacterium populi).